The primary structure comprises 721 residues: Polyribonucleotide nucleotidyltransferase (721 aa).

Mg(2+) contacts are provided by D495 and D501. The region spanning P562–I621 is the KH domain. Positions G631–K699 constitute an S1 motif domain. Residues K699–K721 form a disordered region.

The protein belongs to the polyribonucleotide nucleotidyltransferase family. Mg(2+) serves as cofactor.

The protein localises to the cytoplasm. It carries out the reaction RNA(n+1) + phosphate = RNA(n) + a ribonucleoside 5'-diphosphate. Its function is as follows. Involved in mRNA degradation. Catalyzes the phosphorolysis of single-stranded polyribonucleotides processively in the 3'- to 5'-direction. The protein is Polyribonucleotide nucleotidyltransferase of Anaeromyxobacter dehalogenans (strain 2CP-C).